The chain runs to 122 residues: Large ribosomal subunit protein uL14 (122 aa).

This sequence belongs to the universal ribosomal protein uL14 family. In terms of assembly, part of the 50S ribosomal subunit. Forms a cluster with proteins L3 and L19. In the 70S ribosome, L14 and L19 interact and together make contacts with the 16S rRNA in bridges B5 and B8. Interacts with ribosomal silencing factor RsfS, which may inhibit ribosomal subunit association.

Functionally, binds to 23S rRNA. Forms part of two intersubunit bridges in the 70S ribosome. The sequence is that of Large ribosomal subunit protein uL14 from Treponema pallidum (strain Nichols).